A 127-amino-acid chain; its full sequence is ATP synthase epsilon chain (127 aa).

The protein belongs to the ATPase epsilon chain family. F-type ATPases have 2 components, CF(1) - the catalytic core - and CF(0) - the membrane proton channel. CF(1) has five subunits: alpha(3), beta(3), gamma(1), delta(1), epsilon(1). CF(0) has three main subunits: a, b and c.

Its subcellular location is the cell inner membrane. Its function is as follows. Produces ATP from ADP in the presence of a proton gradient across the membrane. This chain is ATP synthase epsilon chain, found in Leptospira borgpetersenii serovar Hardjo-bovis (strain JB197).